We begin with the raw amino-acid sequence, 186 residues long: dCTP deaminase (186 aa).

Lysine 107–arginine 112 serves as a coordination point for dCTP. The active-site Proton donor/acceptor is the glutamate 133. DCTP-binding residues include glutamine 152, tyrosine 166, and glutamine 176.

The protein belongs to the dCTP deaminase family. Homotrimer.

It carries out the reaction dCTP + H2O + H(+) = dUTP + NH4(+). Its pathway is pyrimidine metabolism; dUMP biosynthesis; dUMP from dCTP (dUTP route): step 1/2. Functionally, catalyzes the deamination of dCTP to dUTP. This is dCTP deaminase from Campylobacter jejuni (strain RM1221).